A 189-amino-acid chain; its full sequence is Myb-like protein T (189 aa).

In terms of domain architecture, Myb-like spans 121–172; sequence NWSPDEQKALMVEVSTLGNKSEINWFFISQQLFLKGISRNARECQRKHESIQ.

This chain is Myb-like protein T (mybT), found in Dictyostelium discoideum (Social amoeba).